The chain runs to 859 residues: MTATPGAAADAVRVEGAGACSDGGEEARYASSASLARMLYGADLSERVRRRHPAVCVEHQSGRPVALPSPLAADARRVTVVRAPMGSGKTTALLRWLGEALGATDASVLVVSCRRSFTRTLHERLRDAALPAFATYFDARSYVMTGAAYRRLLVQVESLHRVDEELLGDYDILVLDEVMSTLAQLYSPTMGRLHRVDALLHRLLRRCPRIVAMDATVNAQLVDLLAALRGAGSVHVVICDYASAGFLQRRCTVARRLGARVLAARLKGDAEDGAEDGGASFFTRLRARLEAGHNVCVFSSTVLFSELAARFCLTFTPSVLVLNSTRPAEGDVSRWRDVRVLIYTTVITVGLSFDHSYFHAMFAYVKPMSHGPDMVSVYQSLGRIRSLVDNELCVYFDSSAARPEPVFTPMLLNHVVAEDGGWPATFSEVTNLLCCSFRAACAPAFRGARGLALFPRFKYKHLFERCTLASASDSLNILHALLENNRVGFQLEALRSAHRRGILPLSRGRARRRPAAAADLRALAAGIPSPVSAEGLAEHPAVAAFADKYLRAGGAPPAALEELLRALNGPAARARFVNLAVLGGCLHVPAAAESLEVFAGIYRHYASGEVPVLTEAGAVETAALAPGLRWKPTALFGLRRMARALGLLRRRGGGEADDVADAAHGLTEPAIVELVGPPGGHDYAQCLLEIARCNITPAGVMARGPVVAVAARLSGRGFAQGRGVGLGAAAHAVSVFKVIWEEVFGARLQKSTQTFPGHARVKNLRKHEIVALLDLAGIDRAGRDTHRELYRLLMSHKARFASPKYSLRLPKWGRLLGFAARGPEPGPDAPPEASLEAALARVPALHWPCAAGAVDFCAL.

Residues 70 to 235 (PLAADARRVT…AALRGAGSVH (166 aa)) enclose the Helicase ATP-binding domain. 83-90 (APMGSGKT) contacts ATP.

It belongs to the herpesviridae OriBP family. Homodimer. Interacts with the major DNA-binding protein. Interacts with the helicase/primase component UL8 and the polymerase accessory protein.

The protein resides in the host nucleus. Functionally, functions as a docking protein to recruit essential components of the viral replication machinery to viral DNA origins. In the presence of the major DNA-binding protein, opens dsDNA leading to a conformational change in the origin that facilitates DNA unwinding and subsequent replication. The polypeptide is Replication origin-binding protein (UL9) (Bovine herpesvirus 1.1 (strain Cooper) (BoHV-1)).